A 165-amino-acid polypeptide reads, in one-letter code: CDP-archaeol synthase (165 aa).

3 consecutive transmembrane segments (helical) span residues 4-24 (IVQLFLLIWPPYVANGSAVLA), 78-98 (LLDAFLLATAAIVGDLLGAFV), and 118-138 (FLLMALLVYSLYRELHIPLLL).

This sequence belongs to the CDP-archaeol synthase family. Requires Mg(2+) as cofactor.

It localises to the cell membrane. It carries out the reaction 2,3-bis-O-(geranylgeranyl)-sn-glycerol 1-phosphate + CTP + H(+) = CDP-2,3-bis-O-(geranylgeranyl)-sn-glycerol + diphosphate. It participates in membrane lipid metabolism; glycerophospholipid metabolism. Catalyzes the formation of CDP-2,3-bis-(O-geranylgeranyl)-sn-glycerol (CDP-archaeol) from 2,3-bis-(O-geranylgeranyl)-sn-glycerol 1-phosphate (DGGGP) and CTP. This reaction is the third ether-bond-formation step in the biosynthesis of archaeal membrane lipids. This chain is CDP-archaeol synthase, found in Pyrobaculum calidifontis (strain DSM 21063 / JCM 11548 / VA1).